Consider the following 653-residue polypeptide: Zinc finger CCCH domain-containing protein 54 (653 aa).

Residues 242 to 261 (NGGGGGGGSPARARRSNGLS) are disordered. The segment at 260–287 (LSTRRPCHYFSKGICKNGQNCHYSHHQV) adopts a C3H1-type zinc-finger fold. In terms of domain architecture, HTH OST-type spans 313 to 396 (SLETLEMEIT…GQHSVVLAED (84 aa)). One can recognise an RRM domain in the interval 422–497 (HQIYLTFPAE…SRVLVKPYRE (76 aa)). A coiled-coil region spans residues 537-565 (RLMRKQLAEKREMLLEMERRRATVRRLES). The segment at 598-623 (PSLASPDPLEIVSNSQAPPTQAGNIY) is disordered. Residues 609–620 (VSNSQAPPTQAG) show a composition bias toward polar residues.

The protein is Zinc finger CCCH domain-containing protein 54 of Oryza sativa subsp. japonica (Rice).